The primary structure comprises 508 residues: Glycerol kinase (508 aa).

T15 lines the ADP pocket. The ATP site is built by T15, S16, and S17. Residue T15 participates in sn-glycerol 3-phosphate binding. R19 is an ADP binding site. R85, E86, Y138, and D251 together coordinate sn-glycerol 3-phosphate. Glycerol contacts are provided by R85, E86, Y138, D251, and Q252. Positions 273, 317, and 419 each coordinate ADP. 3 residues coordinate ATP: T273, G317, and G419.

This sequence belongs to the FGGY kinase family.

The catalysed reaction is glycerol + ATP = sn-glycerol 3-phosphate + ADP + H(+). It functions in the pathway polyol metabolism; glycerol degradation via glycerol kinase pathway; sn-glycerol 3-phosphate from glycerol: step 1/1. Its activity is regulated as follows. Inhibited by fructose 1,6-bisphosphate (FBP). In terms of biological role, key enzyme in the regulation of glycerol uptake and metabolism. Catalyzes the phosphorylation of glycerol to yield sn-glycerol 3-phosphate. This Mycoplasma genitalium (strain ATCC 33530 / DSM 19775 / NCTC 10195 / G37) (Mycoplasmoides genitalium) protein is Glycerol kinase.